A 549-amino-acid polypeptide reads, in one-letter code: Chaperonin GroEL (549 aa).

ATP contacts are provided by residues 30 to 33 (TLGP), lysine 51, 87 to 91 (DGTTT), glycine 415, 479 to 481 (NAA), and aspartate 495.

This sequence belongs to the chaperonin (HSP60) family. In terms of assembly, forms a cylinder of 14 subunits composed of two heptameric rings stacked back-to-back. Interacts with the co-chaperonin GroES.

It localises to the cytoplasm. It catalyses the reaction ATP + H2O + a folded polypeptide = ADP + phosphate + an unfolded polypeptide.. Functionally, together with its co-chaperonin GroES, plays an essential role in assisting protein folding. The GroEL-GroES system forms a nano-cage that allows encapsulation of the non-native substrate proteins and provides a physical environment optimized to promote and accelerate protein folding. This Stenotrophomonas maltophilia (strain R551-3) protein is Chaperonin GroEL.